The chain runs to 23 residues: Textile convulsant peptide (23 aa).

Intrachain disulfides connect cysteine 2–cysteine 10, cysteine 5–cysteine 15, and cysteine 9–cysteine 20. Proline amide; partial is present on proline 23.

The C-terminal amidation is described in Ref.1 and PubMed:23031820, but not in PubMed:22709442 and PubMed:36235146. Post-translationally, ju et al. (2022) describe a disulfide connectivity (C55-C61; C56-C69; C66-C68) that differs for the usual one. Expressed by the venom duct. Is present in all duct parts with a highest content in part 2 (proximal of the venom bulb) and then decreases in concentration toward the end of the duct.

The protein localises to the secreted. Functionally, causes convulsions mice. This Conus textile (Cloth-of-gold cone) protein is Textile convulsant peptide.